The following is a 234-amino-acid chain: MPTPHIEAQKGEIADKILLPGDPLRAKFIAENFLEDAVQFNQVRGMLGFTGTYKGHRVSVMGTGMGIPSISIYANELITEYGVKRLIRVGTAGSVNEDVHIRDLVIGQAAATTSAIVRHDFPDFDFPQIADFDLLDKAYHIAKDLGITTHVGNILSSDLFYGGPDAVKVGKLGVKAVEMEAAGLYYLGAKYKVQTLGIMTISDHILTGESTTSEERQLTFTDMMKVGLETLIAE.

A purine D-ribonucleoside is bound at residue His-5. Phosphate contacts are provided by residues Gly-21, Arg-25, Arg-44, and Arg-88–Thr-91. Residues Glu-178 to Glu-180 and Ser-202 to Asp-203 contribute to the a purine D-ribonucleoside site. Asp-203 (proton donor) is an active-site residue.

Belongs to the PNP/UDP phosphorylase family. Homohexamer; trimer of homodimers.

The catalysed reaction is a purine D-ribonucleoside + phosphate = a purine nucleobase + alpha-D-ribose 1-phosphate. The enzyme catalyses a purine 2'-deoxy-D-ribonucleoside + phosphate = a purine nucleobase + 2-deoxy-alpha-D-ribose 1-phosphate. In terms of biological role, catalyzes the reversible phosphorolytic breakdown of the N-glycosidic bond in the beta-(deoxy)ribonucleoside molecules, with the formation of the corresponding free purine bases and pentose-1-phosphate. The protein is Purine nucleoside phosphorylase DeoD-type of Lactococcus lactis subsp. cremoris (strain MG1363).